A 577-amino-acid polypeptide reads, in one-letter code: Protein NUCLEOLAR COMPLEX ASSOCIATED 4 (577 aa).

The disordered stretch occupies residues 230-263 (PEKQAEKSQHEMWSGSDESISEKPTDKKKKTEKG). Transmembrane regions (helical) follow at residues 329–349 (IGGV…TQHG), 350–370 (LEYP…VFVA), and 404–424 (LSLS…YNLL).

It belongs to the CBF/MAK21 family. Component of the ribosomal small subunit (SSU) processome composed of at least 40 protein subunits and snoRNA U3. Mostly expressed in flowers and stems and at lower levels in roots, hypocotyls, siliques, leaves and seeds.

Its subcellular location is the nucleus membrane. It is found in the nucleus. The protein localises to the nucleolus. In terms of biological role, essential protein required during embryogenesis. Involved in nucleolar processing of ribosomal RNA (rRNA) 40S and 90S ribosomal subunits and ribosome assembly; early in ribosome biogenesis, especially required during the maturation of 5.8S rRNA. Has a role in the nuclear export of 40S pre-ribosomal subunit to the cytoplasm. This is Protein NUCLEOLAR COMPLEX ASSOCIATED 4 from Arabidopsis thaliana (Mouse-ear cress).